The sequence spans 228 residues: Lipoprotein-releasing system ATP-binding protein LolD (228 aa).

Residues 5 to 228 (LRCHQVCKTY…DGLLTDITGA (224 aa)) form the ABC transporter domain. 41–48 (GSSGSGKS) is a binding site for ATP.

Belongs to the ABC transporter superfamily. Lipoprotein translocase (TC 3.A.1.125) family. In terms of assembly, the complex is composed of two ATP-binding proteins (LolD) and two transmembrane proteins (LolC and LolE).

Its subcellular location is the cell inner membrane. Part of the ABC transporter complex LolCDE involved in the translocation of mature outer membrane-directed lipoproteins, from the inner membrane to the periplasmic chaperone, LolA. Responsible for the formation of the LolA-lipoprotein complex in an ATP-dependent manner. The sequence is that of Lipoprotein-releasing system ATP-binding protein LolD from Vibrio cholerae serotype O1 (strain ATCC 39315 / El Tor Inaba N16961).